We begin with the raw amino-acid sequence, 499 residues long: MPGGFILAIDEGTTSARAIIYNQDLEVLGIGQYDFPQHYPSPGYVEHNPDEIWNAQMLAIKEAMKKAKIESRQVAGIGVTNQRETTILWDAISGKPIYNAIVWQDRRTSNITDWLKENYFGMIKDKTGLIPDPYFSGSKIKWILDNLPNVRSKAEKGEIKFGTIDTYLIWKLTNGKIHVTDYSNASRTMLFNINKLEWDREILELLKIPESILPEVRPSSDIYGYTEVLGSSIPISGDAGDQQAALFGQVAYDMGEVKSTYGTGSFILMNIGSNPIFSENLLTTIAWGLESKRVTYALEGSIFITGAAVQWFRDGLRAIDASDDIEPLAASVPDTGGVYFVPAFVGLGAPYWDPYARGLIIGITRGTTKAHIARAILESIAYQNRDVIEIMEKESGTKINILKVDGGGAKDNLLMQFQADILGIRVVRPKVMETASMGVAMLAGLAINYWNSLNELKQKWTVDKEFIPSINKEERERRYNAWKEAVKRSLGWEKSLGSK.

Thr-13 contributes to the ADP binding site. Residues Thr-13, Thr-14, and Ser-15 each coordinate ATP. Residue Thr-13 participates in sn-glycerol 3-phosphate binding. Arg-17 serves as a coordination point for ADP. Positions 83, 84, 134, and 241 each coordinate sn-glycerol 3-phosphate. Glycerol-binding residues include Arg-83, Glu-84, Tyr-134, Asp-241, and Gln-242. Positions 263 and 306 each coordinate ADP. ATP is bound by residues Thr-263, Gly-306, Gln-310, and Gly-407. Residue Gly-407 participates in ADP binding.

Belongs to the FGGY kinase family.

The enzyme catalyses glycerol + ATP = sn-glycerol 3-phosphate + ADP + H(+). It functions in the pathway polyol metabolism; glycerol degradation via glycerol kinase pathway; sn-glycerol 3-phosphate from glycerol: step 1/1. In terms of biological role, key enzyme in the regulation of glycerol uptake and metabolism. Catalyzes the phosphorylation of glycerol to yield sn-glycerol 3-phosphate. This Saccharolobus solfataricus (strain ATCC 35092 / DSM 1617 / JCM 11322 / P2) (Sulfolobus solfataricus) protein is Glycerol kinase 2.